Consider the following 479-residue polypeptide: Kynurenine 3-monooxygenase (479 aa).

FAD contacts are provided by residues Val-19, 37 to 40, and Ala-57; that span reads YEAR. Arg-85 and Tyr-99 together coordinate L-kynurenine. Residues Arg-111, Leu-136, Thr-172, Asp-304, and 317–318 contribute to the FAD site; that span reads MN. The L-kynurenine site is built by Asn-363 and Tyr-398. 2 consecutive transmembrane segments (helical) span residues 385-404 and 425-445; these read FLHA…VAFT and GLFV…VHHL.

Belongs to the aromatic-ring hydroxylase family. KMO subfamily. Requires FAD as cofactor. Expressed by organs containing secondary lymphoid tissue, such as the lung, spleen, mesenteric lymph node, thymus and peripheral lymph nodes.

It localises to the mitochondrion outer membrane. It catalyses the reaction L-kynurenine + NADPH + O2 + H(+) = 3-hydroxy-L-kynurenine + NADP(+) + H2O. It participates in cofactor biosynthesis; NAD(+) biosynthesis; quinolinate from L-kynurenine: step 1/3. Functionally, catalyzes the hydroxylation of L-kynurenine (L-Kyn) to form 3-hydroxy-L-kynurenine (L-3OHKyn). Required for synthesis of quinolinic acid, a neurotoxic NMDA receptor antagonist and potential endogenous inhibitor of NMDA receptor signaling in axonal targeting, synaptogenesis and apoptosis during brain development. Quinolinic acid may also affect NMDA receptor signaling in pancreatic beta cells, osteoblasts, myocardial cells, and the gastrointestinal tract. The protein is Kynurenine 3-monooxygenase of Mus musculus (Mouse).